The sequence spans 589 residues: Aspartate--tRNA(Asp/Asn) ligase (589 aa).

Glutamate 170 is a binding site for L-aspartate. Residues 194–197 are aspartate; the sequence is QLFK. Position 216 (arginine 216) interacts with L-aspartate. ATP is bound by residues 216 to 218 and glutamine 225; that span reads RDE. Position 448 (histidine 448) interacts with L-aspartate. Glutamate 482 is an ATP binding site. Arginine 489 is an L-aspartate binding site. 534 to 537 provides a ligand contact to ATP; sequence GWDR. The disordered stretch occupies residues 563-589; sequence PLTDAPASITAQQRKESGIDTKPKEVE. Residues 575-589 show a composition bias toward basic and acidic residues; the sequence is QRKESGIDTKPKEVE.

It belongs to the class-II aminoacyl-tRNA synthetase family. Type 1 subfamily. In terms of assembly, homodimer.

The protein resides in the cytoplasm. It carries out the reaction tRNA(Asx) + L-aspartate + ATP = L-aspartyl-tRNA(Asx) + AMP + diphosphate. In terms of biological role, aspartyl-tRNA synthetase with relaxed tRNA specificity since it is able to aspartylate not only its cognate tRNA(Asp) but also tRNA(Asn). Reaction proceeds in two steps: L-aspartate is first activated by ATP to form Asp-AMP and then transferred to the acceptor end of tRNA(Asp/Asn). This chain is Aspartate--tRNA(Asp/Asn) ligase, found in Mycobacterium leprae (strain Br4923).